The sequence spans 89 residues: Small ribosomal subunit protein uS15 (89 aa).

This sequence belongs to the universal ribosomal protein uS15 family. In terms of assembly, part of the 30S ribosomal subunit. Forms a bridge to the 50S subunit in the 70S ribosome, contacting the 23S rRNA.

In terms of biological role, one of the primary rRNA binding proteins, it binds directly to 16S rRNA where it helps nucleate assembly of the platform of the 30S subunit by binding and bridging several RNA helices of the 16S rRNA. Functionally, forms an intersubunit bridge (bridge B4) with the 23S rRNA of the 50S subunit in the ribosome. This chain is Small ribosomal subunit protein uS15, found in Shewanella amazonensis (strain ATCC BAA-1098 / SB2B).